Here is a 336-residue protein sequence, read N- to C-terminus: Dihydroorotate dehydrogenase (quinone) (336 aa).

FMN-binding positions include 62 to 66 (AGLDK) and Thr-86. Lys-66 provides a ligand contact to substrate. A substrate-binding site is contributed by 111 to 115 (NRMGF). FMN-binding residues include Asn-139 and Asn-172. Asn-172 contacts substrate. Residue Ser-175 is the Nucleophile of the active site. Asn-177 serves as a coordination point for substrate. Positions 217 and 245 each coordinate FMN. A substrate-binding site is contributed by 246–247 (NT). Residues Gly-268, Gly-297, and 318 to 319 (YS) contribute to the FMN site.

Belongs to the dihydroorotate dehydrogenase family. Type 2 subfamily. In terms of assembly, monomer. Requires FMN as cofactor.

The protein resides in the cell membrane. It catalyses the reaction (S)-dihydroorotate + a quinone = orotate + a quinol. The protein operates within pyrimidine metabolism; UMP biosynthesis via de novo pathway; orotate from (S)-dihydroorotate (quinone route): step 1/1. Catalyzes the conversion of dihydroorotate to orotate with quinone as electron acceptor. This Sodalis glossinidius (strain morsitans) protein is Dihydroorotate dehydrogenase (quinone).